A 208-amino-acid chain; its full sequence is Large ribosomal subunit protein uL4 (208 aa).

The interval Ala-47–Gly-84 is disordered. Residues Ala-49–Arg-58 show a composition bias toward basic and acidic residues.

It belongs to the universal ribosomal protein uL4 family. Part of the 50S ribosomal subunit.

One of the primary rRNA binding proteins, this protein initially binds near the 5'-end of the 23S rRNA. It is important during the early stages of 50S assembly. It makes multiple contacts with different domains of the 23S rRNA in the assembled 50S subunit and ribosome. Functionally, forms part of the polypeptide exit tunnel. The protein is Large ribosomal subunit protein uL4 of Rhizorhabdus wittichii (strain DSM 6014 / CCUG 31198 / JCM 15750 / NBRC 105917 / EY 4224 / RW1) (Sphingomonas wittichii).